A 271-amino-acid polypeptide reads, in one-letter code: MKI67 FHA domain-interacting nucleolar phosphoprotein (271 aa).

Residues 1-20 (MAEYSGPAKPTLALNPREDS) form a disordered region. N-acetylalanine is present on Ala2. Lys37 participates in a covalent cross-link: Glycyl lysine isopeptide (Lys-Gly) (interchain with G-Cter in SUMO2). The RRM domain occupies 44–122 (GVVYLGHLPS…RLLSCKFMPR (79 aa)). Omega-N-methylarginine is present on Arg113. Residues Lys178 and Lys191 each participate in a glycyl lysine isopeptide (Lys-Gly) (interchain with G-Cter in SUMO2) cross-link. Thr213 and Thr217 each carry phosphothreonine. An omega-N-methylated arginine mark is found at Arg223 and Arg224. Ser226 is subject to Phosphoserine. The interval 242 to 271 (PVSPVKEDTQKTPAPESSGKKRLRKRKSKQ) is disordered. A Glycyl lysine isopeptide (Lys-Gly) (interchain with G-Cter in SUMO1); alternate cross-link involves residue Lys247. Lys247 is covalently cross-linked (Glycyl lysine isopeptide (Lys-Gly) (interchain with G-Cter in SUMO2); alternate). A compositionally biased stretch (basic residues) spans 261 to 271 (KKRLRKRKSKQ).

Binds to the FHA domain of MKI67; this interaction is enhanced in mitosis. Post-translationally, phosphorylated.

Its subcellular location is the nucleus. The protein localises to the nucleolus. The protein resides in the chromosome. The chain is MKI67 FHA domain-interacting nucleolar phosphoprotein (Nifk) from Rattus norvegicus (Rat).